The chain runs to 530 residues: Ubiquitin carboxyl-terminal hydrolase 17-like protein 21 (530 aa).

The USP domain occupies 80-375; that stretch reads AGLQNMGNTC…QAYVLFYIQK (296 aa). The active-site Nucleophile is Cys-89. His-334 serves as the catalytic Proton acceptor. Basic and acidic residues-rich tracts occupy residues 382–392 and 398–412; these read SESVSRGREPR and DTDR…KRDH. Disordered regions lie at residues 382 to 412 and 477 to 530; these read SESV…KRDH and NHHP…LVCQ. A compositionally biased stretch (polar residues) spans 493 to 505; that stretch reads TPTHQESMNTGTL. The segment covering 510-524 has biased composition (basic residues); that stretch reads GRARRSKGKNKHSKR.

This sequence belongs to the peptidase C19 family. USP17 subfamily.

The protein resides in the nucleus. It localises to the endoplasmic reticulum. The enzyme catalyses Thiol-dependent hydrolysis of ester, thioester, amide, peptide and isopeptide bonds formed by the C-terminal Gly of ubiquitin (a 76-residue protein attached to proteins as an intracellular targeting signal).. Its function is as follows. Deubiquitinating enzyme that removes conjugated ubiquitin from specific proteins to regulate different cellular processes that may include cell proliferation, progression through the cell cycle, apoptosis, cell migration, and the cellular response to viral infection. This is Ubiquitin carboxyl-terminal hydrolase 17-like protein 21 (USP17L21) from Homo sapiens (Human).